Consider the following 333-residue polypeptide: Ketoreductase sphI (333 aa).

Tyr-167 is an NADP(+) binding site.

Belongs to the NAD(P)-dependent epimerase/dehydratase family. Dihydroflavonol-4-reductase subfamily.

Functionally, ketoreductase; part of the gene cluster that mediates the biosynthesis of sphingofungins, bioactive molecules acting as sphingolipid inhibitors via inhibiting serine palmitoyl transferase (SPT). Does not seem to be involved in any biosynthetic process leading to the production of sphingofungins, but might be connected to a regulation or resistance mechanism. This Aspergillus fumigatus (strain CBS 144.89 / FGSC A1163 / CEA10) (Neosartorya fumigata) protein is Ketoreductase sphI.